Consider the following 398-residue polypeptide: MSLELSSNESEDNFRDELVDISGQVSKKPINIDSRQVRLILDHTAFVRGIGNIKRWFNEEYINSNTTRSNEIINLNIYIPTYTLHEFDFVKKGTSISATNAREAIRFIDNYLENEVEMNSDKIQYNLILESPQDNVPSWNKCNHYKVHSPKIKEFPNYKTKFDSSLIGQTPNVNEDSEFNENFDNALTFNQRNKLNDIQYENSASYQNAIANSDNLAEMPVRLRYLIRSCIYKRFIETKKPKIKNEIEDWKLVTEDPITKIWAKSYGIDCLNVNEAELLIFQNYDVNSFRLYNPYANDGDDFDPSTNILQNTIDTTLYSYSSVQDEPVTSNYRGKNNRGRNNRGRRGNKRRERERWPLSTDAVVSEERNESGTGFIKKEKFGAINYAPRGQGELWRPG.

Positions 327–355 are disordered; it reads PVTSNYRGKNNRGRNNRGRRGNKRRERER. Over residues 335 to 350 the composition is skewed to basic residues; it reads KNNRGRNNRGRRGNKR.

It localises to the cytoplasm. In terms of biological role, involved in nonsense-mediated decay of mRNAs containing premature stop codons. This Candida albicans (strain SC5314 / ATCC MYA-2876) (Yeast) protein is Nonsense-mediated decay protein 4 (NMD4).